Here is a 170-residue protein sequence, read N- to C-terminus: Non-specific lipid transfer protein GPI-anchored 5 (170 aa).

The first 24 residues, Met-1–Ala-24, serve as a signal peptide directing secretion. 4 disulfide bridges follow: Cys-28–Cys-69, Cys-38–Cys-53, Cys-54–Cys-95, and Cys-67–Cys-105. Asn-45, Asn-84, Asn-124, and Asn-130 each carry an N-linked (GlcNAc...) asparagine glycan. Positions Cys-105–Gly-148 are disordered. A lipid anchor (GPI-anchor amidated serine) is attached at Ser-146. The propeptide at Asp-147–Phe-170 is removed in mature form.

It belongs to the plant LTP family. In terms of tissue distribution, expressed in seedlings, preferentially in the endodermis of hypocotyls and roots, as well as in anthers, sepals and flower tori.

It localises to the cell membrane. Its function is as follows. Lipid transfer protein involved in seed and ovule maturation and development, probably by regulating the fatty acids homeostasis during suberin and sporopollenin biosynthesis or deposition. Contributes to pre-invasive defense against some non-host powdery mildew pathogens by preventing the penetration of the epidermal cell wall by the fungal agents (e.g. Blumeria graminis f. sp. hordei (Bgh)). In Arabidopsis thaliana (Mouse-ear cress), this protein is Non-specific lipid transfer protein GPI-anchored 5.